The following is a 264-amino-acid chain: 3-methyl-2-oxobutanoate hydroxymethyltransferase (264 aa).

Positions 45 and 84 each coordinate Mg(2+). 3-methyl-2-oxobutanoate is bound by residues 45–46 (DS), aspartate 84, and lysine 112. Glutamate 114 provides a ligand contact to Mg(2+). Glutamate 181 functions as the Proton acceptor in the catalytic mechanism.

This sequence belongs to the PanB family. As to quaternary structure, homodecamer; pentamer of dimers. Mg(2+) serves as cofactor.

The protein localises to the cytoplasm. It catalyses the reaction 3-methyl-2-oxobutanoate + (6R)-5,10-methylene-5,6,7,8-tetrahydrofolate + H2O = 2-dehydropantoate + (6S)-5,6,7,8-tetrahydrofolate. The protein operates within cofactor biosynthesis; (R)-pantothenate biosynthesis; (R)-pantoate from 3-methyl-2-oxobutanoate: step 1/2. Catalyzes the reversible reaction in which hydroxymethyl group from 5,10-methylenetetrahydrofolate is transferred onto alpha-ketoisovalerate to form ketopantoate. The sequence is that of 3-methyl-2-oxobutanoate hydroxymethyltransferase from Shewanella frigidimarina (strain NCIMB 400).